The primary structure comprises 201 residues: Small ribosomal subunit protein uS4 (201 aa).

The disordered stretch occupies residues 20-46 (SGTGKELSRRPYAPGQHGQDRRGSLSE). The S4 RNA-binding domain occupies 93-156 (RRLDNVVYRL…KDLQIVKEAL (64 aa)).

It belongs to the universal ribosomal protein uS4 family. Part of the 30S ribosomal subunit. Contacts protein S5. The interaction surface between S4 and S5 is involved in control of translational fidelity.

Functionally, one of the primary rRNA binding proteins, it binds directly to 16S rRNA where it nucleates assembly of the body of the 30S subunit. Its function is as follows. With S5 and S12 plays an important role in translational accuracy. In Ligilactobacillus salivarius (strain UCC118) (Lactobacillus salivarius), this protein is Small ribosomal subunit protein uS4.